The chain runs to 373 residues: Glutamine synthetase (373 aa).

At alanine 2 the chain carries N-acetylalanine. Residues 2–25 (ATSASSHLNKGIKQVYMSLPQGEK) are required for glutamine-induced ubiquitination by CRL4(CRBN) and proteasomal degradation. An N6-acetyllysine mark is found at lysine 11 and lysine 14. Positions 24 to 106 (EKVQAMYIWI…VFCEVFKYNR (83 aa)) constitute a GS beta-grasp domain. At tyrosine 104 the chain carries Phosphotyrosine. The GS catalytic domain maps to 113–373 (LRHTCKRIMD…TGDEPFQYKN (261 aa)). Glutamate 134 is an ATP binding site. Mn(2+)-binding residues include glutamate 134, glutamate 136, glutamate 196, and glutamate 203. Residue 203–208 (EFQIGP) participates in ATP binding. 246–247 (NW) lines the L-glutamate pocket. A Mn(2+)-binding site is contributed by histidine 253. ATP-binding positions include 255 to 257 (NFS), arginine 319, and arginine 324. Residue arginine 319 coordinates L-glutamate. 336-338 (YFE) is an ADP binding site. Glutamate 338 is a Mn(2+) binding site. Position 340 (arginine 340) interacts with L-glutamate. The residue at position 343 (serine 343) is a Phosphoserine.

It belongs to the glutamine synthetase family. As to quaternary structure, decamer; composed of two pentamers. Interacts with PALMD. Interacts with RHOJ. Interacts with BEST2; this interaction tethers a fraction of GLUL to the membrane, causing a decrease of cytosolic glutamine synthase (GS) activity and inhibits the chloride channel activity of BEST2 by affecting the gating at the aperture in the absence of intracellular glutamate. Mg(2+) serves as cofactor. Mn(2+) is required as a cofactor. In terms of processing, palmitoylated; undergoes autopalmitoylation. Post-translationally, acetylated by EP300/p300; acetylation is stimulated by increased glutamine levels and promotes ubiquitin-mediated proteasomal degradation. Ubiquitinated by ZNRF1. Ubiquitinated by the DCX (DDB1-CUL4-X-box) E3 ubiquitin-protein ligase complex called CRL4(CRBN), leading to proteasomal degradation.

It is found in the cytoplasm. It localises to the cytosol. Its subcellular location is the microsome. The protein resides in the mitochondrion. The protein localises to the cell membrane. It carries out the reaction L-glutamate + NH4(+) + ATP = L-glutamine + ADP + phosphate + H(+). It catalyses the reaction L-cysteinyl-[protein] + hexadecanoyl-CoA = S-hexadecanoyl-L-cysteinyl-[protein] + CoA. Glutamine synthetase activity is inhibited by methionine sulfoximine (MSO). Its function is as follows. Glutamine synthetase that catalyzes the ATP-dependent conversion of glutamate and ammonia to glutamine. Its role depends on tissue localization: in the brain, it regulates the levels of toxic ammonia and converts neurotoxic glutamate to harmless glutamine, whereas in the liver, it is one of the enzymes responsible for the removal of ammonia. Plays a key role in ammonium detoxification during erythropoiesis: the glutamine synthetase activity is required to remove ammonium generated by porphobilinogen deaminase (HMBS) during heme biosynthesis to prevent ammonium accumulation and oxidative stress. Essential for proliferation of fetal skin fibroblasts. Independently of its glutamine synthetase activity, required for endothelial cell migration during vascular development. Involved in angiogenesis by regulating membrane localization and activation of the GTPase RHOJ, possibly by promoting RHOJ palmitoylation. May act as a palmitoyltransferase for RHOJ: able to autopalmitoylate and then transfer the palmitoyl group to RHOJ. Plays a role in ribosomal 40S subunit biogenesis. Through the interaction with BEST2, inhibits BEST2 channel activity by affecting the gating at the aperture in the absence of intracellular L-glutamate, but sensitizes BEST2 to intracellular L-glutamate, which promotes the opening of BEST2 and thus relieves its inhibitory effect on BEST2. The polypeptide is Glutamine synthetase (Sus scrofa (Pig)).